A 537-amino-acid chain; its full sequence is MKCNTLKLTEQDQFINKIKNSESQITSFYEYDAAKKESFYRRLKTPNNGREFHLSRVIKSYMNELKLTHQQLNNIDALADGAKVVIGGQQAGLFGGPLYTFHKIFSIITLSRQLSEEYDTPIVPVFWIAGEDHDFEEVNHTYAFNNKETTLKKVKYHTMTPPDSNVSRYTPDKNELKASLNHFFKEMKETVHTQDVYQMCVNIINQFDSWTDIFKGLIHEVFKDYGILFIDAQYPELRQMEKPLFKEILEKRNQIDQSFRETQIRKTQQQLPSMIQTETNTHLFIHEDGMRQLLNFDGTYFKLNKTEKRYTKQNLLDIIEREPERISNNVVTRPVVEEWLFNTVAFIGGPSEIKYWAELKDVFDTLNVEMPIVMPRLRITYLYARTKKLLKQYNLSIESVIANGVEQERQHFVREKASNNFINEVEEMKIQQQELYNNLFTYVENNHDNQLLLEKNNQIHLNQYDYLIKRYLLNIERENDISMRQFREISETLHPMGGLQERVWNPLQIMNDFGIDVFSPTTYPPLSYSFDHLIINP.

A coiled-coil region spans residues 415–439 (EKASNNFINEVEEMKIQQQELYNNL).

It belongs to the BshC family.

In terms of biological role, involved in bacillithiol (BSH) biosynthesis. May catalyze the last step of the pathway, the addition of cysteine to glucosamine malate (GlcN-Mal) to generate BSH. This chain is Putative cysteine ligase BshC, found in Staphylococcus epidermidis (strain ATCC 12228 / FDA PCI 1200).